The primary structure comprises 192 residues: Crossover junction endodeoxyribonuclease RuvC (192 aa).

Active-site residues include aspartate 7, glutamate 67, and aspartate 140. The Mg(2+) site is built by aspartate 7, glutamate 67, and aspartate 140. Residues 158-192 are disordered; the sequence is RQSGVPPRTNSRRKSGTGGSWEQFVRQSPNVVVRS. Positions 182-192 are enriched in polar residues; the sequence is VRQSPNVVVRS.

Belongs to the RuvC family. Homodimer which binds Holliday junction (HJ) DNA. The HJ becomes 2-fold symmetrical on binding to RuvC with unstacked arms; it has a different conformation from HJ DNA in complex with RuvA. In the full resolvosome a probable DNA-RuvA(4)-RuvB(12)-RuvC(2) complex forms which resolves the HJ. The cofactor is Mg(2+).

It is found in the cytoplasm. It catalyses the reaction Endonucleolytic cleavage at a junction such as a reciprocal single-stranded crossover between two homologous DNA duplexes (Holliday junction).. In terms of biological role, the RuvA-RuvB-RuvC complex processes Holliday junction (HJ) DNA during genetic recombination and DNA repair. Endonuclease that resolves HJ intermediates. Cleaves cruciform DNA by making single-stranded nicks across the HJ at symmetrical positions within the homologous arms, yielding a 5'-phosphate and a 3'-hydroxyl group; requires a central core of homology in the junction. The consensus cleavage sequence is 5'-(A/T)TT(C/G)-3'. Cleavage occurs on the 3'-side of the TT dinucleotide at the point of strand exchange. HJ branch migration catalyzed by RuvA-RuvB allows RuvC to scan DNA until it finds its consensus sequence, where it cleaves and resolves the cruciform DNA. The polypeptide is Crossover junction endodeoxyribonuclease RuvC (Chlorobium chlorochromatii (strain CaD3)).